The primary structure comprises 1002 residues: Golgin subfamily A member 2 (1002 aa).

Residues 1–11 (MWPQPRLPPRP) show a composition bias toward pro residues. The interaction with p115/USO1 stretch occupies residues 1-84 (MWPQPRLPPR…AATLQPSDDT (84 aa)). The interval 1 to 107 (MWPQPRLPPR…TSMAASQNHD (107 aa)) is disordered. A coiled-coil region spans residues 16–892 (ETRQSKLAAA…LELQELVLRL (877 aa)). Residues Arg-18, Arg-30, and Arg-35 each carry the dimethylated arginine modification. Positions 26 to 49 (KKKLREYQQRNSPGVPTGAKKKKK) match the Nuclear localization signal motif. Ser-37 carries the phosphoserine modification. Polar residues predominate over residues 52–63 (NGSNPETTTSGG). Ser-66 carries the post-translational modification Phosphoserine. A compositionally biased stretch (polar residues) spans 95-105 (ASLTSMAASQN). Ser-273, Ser-438, and Ser-690 each carry phosphoserine. A disordered region spans residues 694-724 (HPGEGDGLDREEEEDEEEEEEEAVAVPQPMP). Residues 702–716 (DREEEEDEEEEEEEA) are compositionally biased toward acidic residues. Phosphoserine is present on residues Ser-937, Ser-953, and Ser-981. The segment at 992–1002 (DENDEVKITVI) is interaction with GORASP1/GRASP65.

It belongs to the GOLGA2 family. In terms of assembly, homodimer, may assemble into homohexamers. Homotetramer; forms a parallel homotetramer with a flexible rod-like structure that can give rise to I- and Y-shaped conformations. Interacts with GORASP1/GRASP65. The homooligomer forms a complex with GORASP1 with a 1:1 stoichiometry. Interacts with RAB1B that has been activated by GTP-binding. Interacts with p115/USO1; interaction with p115/USO1 inhibits interaction with STX5 and/or RAB1B. Interacts with STX5. Interacts with ZFPL1. Interacts with AKAP450/AKAP9; leading to recruit AKAP450/AKAP9 to the cis-Golgi. In terms of processing, cleaved by caspases at the onset of apoptosis. Methylation by PRMT5 is required for Golgi ribbon formation. While dimethylation at Arg-30 and Arg-35 are confirmed in vivo, it is unclear whether Arg-18 is methylated in vivo. Post-translationally, phosphorylated at Ser-37 by CDK1 at the onset of mitosis, inhibiting the interaction with p115/USO1 and triggering Golgi disassembly. Phosphorylated at Ser-37 in prophase as the Golgi complex starts to break down, and remains phosphorylated during further breakdown and partitioning of the Golgi fragments in metaphase and anaphase. In telophase, GM130 is dephosphorylated by PP2A as the Golgi fragments start to reassemble.

It is found in the golgi apparatus. It localises to the cis-Golgi network membrane. The protein localises to the endoplasmic reticulum-Golgi intermediate compartment membrane. The protein resides in the cytoplasm. Its subcellular location is the cytoskeleton. It is found in the spindle pole. Functionally, peripheral membrane component of the cis-Golgi stack that acts as a membrane skeleton that maintains the structure of the Golgi apparatus, and as a vesicle thether that facilitates vesicle fusion to the Golgi membrane. Required for normal protein transport from the endoplasmic reticulum to the Golgi apparatus and the cell membrane. Together with p115/USO1 and STX5, involved in vesicle tethering and fusion at the cis-Golgi membrane to maintain the stacked and inter-connected structure of the Golgi apparatus. Plays a central role in mitotic Golgi disassembly: phosphorylation at Ser-37 by CDK1 at the onset of mitosis inhibits the interaction with p115/USO1, preventing tethering of COPI vesicles and thereby inhibiting transport through the Golgi apparatus during mitosis. Also plays a key role in spindle pole assembly and centrosome organization. Promotes the mitotic spindle pole assembly by activating the spindle assembly factor TPX2 to nucleate microtubules around the Golgi and capture them to couple mitotic membranes to the spindle: upon phosphorylation at the onset of mitosis, GOLGA2 interacts with importin-alpha via the nuclear localization signal region, leading to recruit importin-alpha to the Golgi membranes and liberate the spindle assembly factor TPX2 from importin-alpha. TPX2 then activates AURKA kinase and stimulates local microtubule nucleation. Upon filament assembly, nascent microtubules are further captured by GOLGA2, thus linking Golgi membranes to the spindle. Regulates the meiotic spindle pole assembly, probably via the same mechanism. Also regulates the centrosome organization. Also required for the Golgi ribbon formation and glycosylation of membrane and secretory proteins. The chain is Golgin subfamily A member 2 (GOLGA2) from Homo sapiens (Human).